The chain runs to 148 residues: Small ribosomal subunit protein uS7m (148 aa).

It belongs to the universal ribosomal protein uS7 family. In terms of assembly, part of the small ribosomal subunit.

The protein localises to the mitochondrion. In terms of biological role, one of the primary rRNA binding proteins, it binds directly to 18S rRNA where it nucleates assembly of the head domain of the small subunit. The polypeptide is Small ribosomal subunit protein uS7m (RPS7) (Arabidopsis thaliana (Mouse-ear cress)).